Here is a 726-residue protein sequence, read N- to C-terminus: MGTERKRKISLFDVMDDPSAPAKNAKTSGLPDGGINSLINKWNGKPYSQRYYDILEKRRTLPVWLQKEEFLKTLNNNQTLILVGETGSGKTTQIPQFVIDAVDAETSDKRRKWLVGCTQPRRVAAMSVSRRVAEEMDVTIGEEVGYSIRFEDCSSPRTVLKYLTDGMLLREAMADPLLERYKVIILDEAHERTLATDVLFGLLKEVLKNRPDLKLVVMSATLEAEKFQDYFSGAPLMKVPGRLHPVEIFYTQEPERDYLEAAIRTVVQIHMCEPPGDILVFLTGEEEIEDACRKINKEVGNLGDQVGPIKVVPLYSTLPPAMQQKIFDPAPEPVTEGGPPGRKIVVSTNIAETSLTIDGIVYVIDPGFAKQKVYNPRIRVESLLVSPISKASAHQRSGRAGRTRPGKCFRLYTEKSFNNDLQPQTYPEILRSNLANTVLTLKKLGIDDLVHFDFMDPPAPETLMRALEVLNYLGALDDDGNLTKTGEIMSEFPLDPQMAKMLIVSPEFNCSNEILSVSAMLSVPNCFIRPREAQKAADEAKARFGHIEGDHLTLLNVYHAFKQNNEDPNWCYENFINNRAMKSADNVRQQLVRIMSRFNLKMCSTDFNSRDYYINIRKAMLAGYFMQVAHLERTGHYLTVKDNQVVHLHPSNCLDHKPEWVIYNEYVLTSRNFIRTVTDIRGEWLVDVASHYYDLSNFPNCEAKRVIEKLYKKREREKEESKKNRK.

The region spanning 71 to 240 (LKTLNNNQTL…FSGAPLMKVP (170 aa)) is the Helicase ATP-binding domain. An ATP-binding site is contributed by 84–91 (GETGSGKT). The DEAH box motif lies at 187–190 (DEAH). Positions 265-445 (TVVQIHMCEP…NTVLTLKKLG (181 aa)) constitute a Helicase C-terminal domain.

It belongs to the DEAD box helicase family. DEAH subfamily. PRP43 sub-subfamily.

The enzyme catalyses ATP + H2O = ADP + phosphate + H(+). Functionally, may be involved in pre-mRNA splicing. In Arabidopsis thaliana (Mouse-ear cress), this protein is Probable pre-mRNA-splicing factor ATP-dependent RNA helicase DEAH2.